The sequence spans 353 residues: WD repeat-containing protein 55 (353 aa).

WD repeat units lie at residues 4–43 (DLGA…SLVR), 49–88 (AHKE…QVAH), 92–130 (AHED…CSHE), 133–172 (AHED…VQSQ), 175–214 (FSED…DCSD), 218–257 (DLAP…IIQP), and 260–299 (SHDY…EGSN). The tract at residues 300–353 (VNSGNASGAAEDSDSDNDGMDLDNDPSKSSKGSKRKTKSKANTLNATNNFFADL) is disordered. The segment covering 310-323 (EDSDSDNDGMDLDN) has biased composition (acidic residues). Residues 339-353 (KANTLNATNNFFADL) show a composition bias toward low complexity.

It belongs to the WD repeat WDR55 family. Interacts with DDB1A. Highly expressed in roots. Expressed in cotyledons, leaves, buds and flowers.

Its subcellular location is the nucleus. It localises to the cytoplasm. Required for male and female gametogenesis, seed development, and embryo and endosperm development at early stages. Involved in the establishment of bilateral symmetry in the transition from the globular to the heart embryo stage. May act in the frame of a CRL4 complex. Required for proper vegetative growth and organization of the adult plant body. May play a role in hormonal control of plant development. The polypeptide is WD repeat-containing protein 55 (Arabidopsis thaliana (Mouse-ear cress)).